We begin with the raw amino-acid sequence, 396 residues long: Cathepsin D (396 aa).

Positions 1–18 (MKFLYLFLFAVFAWTSDA) are cleaved as a signal peptide. A propeptide spans 19-61 (IVRIPLKKFRSIRRTLSDSGLNVEQLLAGTNSLQHNQGFPSSN) (activation peptide). A Peptidase A1 domain is found at 76–393 (YYGEIGLGTP…DRESNRVGFA (318 aa)). Asp-94 is a catalytic residue. Cys-107 and Cys-114 are joined by a disulfide. An N-linked (GlcNAc...) asparagine glycan is attached at Asn-131. Cys-272 and Cys-276 form a disulfide bridge. Residue Asp-281 is part of the active site. The cysteines at positions 315 and 352 are disulfide-linked.

This sequence belongs to the peptidase A1 family. In terms of assembly, monomer.

The protein resides in the lysosome. It carries out the reaction Specificity similar to, but narrower than, that of pepsin A. Does not cleave the 4-Gln-|-His-5 bond in B chain of insulin.. Its activity is regulated as follows. Inhibited by pepstatin. Acid protease active in intracellular protein breakdown. This Clupea harengus (Atlantic herring) protein is Cathepsin D (ctsd).